The chain runs to 1396 residues: DNA-directed RNA polymerase subunit beta (1396 aa).

It belongs to the RNA polymerase beta chain family. As to quaternary structure, the RNAP catalytic core consists of 2 alpha, 1 beta, 1 beta' and 1 omega subunit. When a sigma factor is associated with the core the holoenzyme is formed, which can initiate transcription.

The enzyme catalyses RNA(n) + a ribonucleoside 5'-triphosphate = RNA(n+1) + diphosphate. In terms of biological role, DNA-dependent RNA polymerase catalyzes the transcription of DNA into RNA using the four ribonucleoside triphosphates as substrates. The sequence is that of DNA-directed RNA polymerase subunit beta from Erythrobacter litoralis (strain HTCC2594).